Reading from the N-terminus, the 156-residue chain is Small ribosomal subunit protein uS7 (156 aa).

This sequence belongs to the universal ribosomal protein uS7 family. In terms of assembly, part of the 30S ribosomal subunit. Contacts proteins S9 and S11.

In terms of biological role, one of the primary rRNA binding proteins, it binds directly to 16S rRNA where it nucleates assembly of the head domain of the 30S subunit. Is located at the subunit interface close to the decoding center, probably blocks exit of the E-site tRNA. This is Small ribosomal subunit protein uS7 from Hyphomonas neptunium (strain ATCC 15444).